A 608-amino-acid chain; its full sequence is Phosphogluconate dehydratase (608 aa).

2 residues coordinate [4Fe-4S] cluster: Cys-154 and Cys-221.

It belongs to the IlvD/Edd family. It depends on [4Fe-4S] cluster as a cofactor.

It carries out the reaction 6-phospho-D-gluconate = 2-dehydro-3-deoxy-6-phospho-D-gluconate + H2O. It functions in the pathway carbohydrate metabolism; Entner-Doudoroff pathway. In terms of biological role, catalyzes the dehydration of 6-phospho-D-gluconate to 2-dehydro-3-deoxy-6-phospho-D-gluconate. The sequence is that of Phosphogluconate dehydratase from Pseudomonas aeruginosa (strain ATCC 15692 / DSM 22644 / CIP 104116 / JCM 14847 / LMG 12228 / 1C / PRS 101 / PAO1).